The primary structure comprises 197 residues: MTAIFRSASADDARFTDFSNQFLMAMPGMVNDELAGTVIYICEHTPRGALGLVLNRPTDLTLASLFERIDLTVAMGPTADEKVFFGGPVQTDRGFVLHAPAGDYSSSIRLGDLALTTSRDVLQAVAEGQGPARLFVTLGYAGWGAGQLESEMSQNAWLSVAADPVIIFDVPAEERYPAAMRLLGIDPLMLAGEAGHA.

The protein belongs to the UPF0301 (AlgH) family.

The chain is UPF0301 protein BAV3012 from Bordetella avium (strain 197N).